We begin with the raw amino-acid sequence, 232 residues long: Ribonuclease 3 (232 aa).

The RNase III domain occupies 7–136 (AALLEDTIDY…LLGAVFCDGG (130 aa)). Glu49 serves as a coordination point for Mg(2+). Asp53 is an active-site residue. The Mg(2+) site is built by Asn122 and Glu125. Glu125 is a catalytic residue. The region spanning 163-232 (DYKTRLQERL…AKQALEYLEE (70 aa)) is the DRBM domain.

Belongs to the ribonuclease III family. In terms of assembly, homodimer. Requires Mg(2+) as cofactor.

The protein resides in the cytoplasm. It carries out the reaction Endonucleolytic cleavage to 5'-phosphomonoester.. In terms of biological role, digests double-stranded RNA. Involved in the processing of primary rRNA transcript to yield the immediate precursors to the large and small rRNAs (23S and 16S). Processes some mRNAs, and tRNAs when they are encoded in the rRNA operon. Processes pre-crRNA and tracrRNA of type II CRISPR loci if present in the organism. The chain is Ribonuclease 3 from Syntrophotalea carbinolica (strain DSM 2380 / NBRC 103641 / GraBd1) (Pelobacter carbinolicus).